A 478-amino-acid chain; its full sequence is Cobyric acid synthase (478 aa).

One can recognise a GATase cobBQ-type domain in the interval 250-437 (QLRVVVPVLP…VHGVFDHPMH (188 aa)). C331 (nucleophile) is an active-site residue. The active site involves H429.

Belongs to the CobB/CobQ family. CobQ subfamily.

Its pathway is cofactor biosynthesis; adenosylcobalamin biosynthesis. Its function is as follows. Catalyzes amidations at positions B, D, E, and G on adenosylcobyrinic A,C-diamide. NH(2) groups are provided by glutamine, and one molecule of ATP is hydrogenolyzed for each amidation. This Xanthomonas euvesicatoria pv. vesicatoria (strain 85-10) (Xanthomonas campestris pv. vesicatoria) protein is Cobyric acid synthase.